The chain runs to 1730 residues: Meiosis regulator and mRNA stability factor 1 (1730 aa).

Serine 65 carries the post-translational modification Phosphoserine. The 138-residue stretch at 352-489 (IGVFWDIENC…ALLHHANQLI (138 aa)) folds into the NYN domain. Residues 655–668 (MESKSGNRNSDHQQ) show a composition bias toward basic and acidic residues. Positions 655 to 722 (MESKSGNRNS…VNSPVEKKKR (68 aa)) are disordered. Tyrosine 698 carries the post-translational modification Phosphotyrosine. The region spanning 781–860 (VDIQVSNVDY…KKILVSLSTG (80 aa)) is the RRM domain. HTH OST-type domains are found at residues 865–939 (SLSL…SPLG) and 993–1069 (SLKV…HNKP). Residues serine 1081 and serine 1083 each carry the phosphoserine modification. 6 HTH OST-type domains span residues 1089–1163 (QLIQ…LTHR), 1165–1241 (QVKR…RKRE), 1249–1324 (RTKQ…TEVE), 1325–1400 (RFKA…INRK), 1401–1475 (SLRS…VKLT), and 1476–1550 (SLYL…LKND). The tract at residues 1667–1714 (VQKGNLSCDSSPSSPAASPAPPGPSSEAPRPLFSKDAVESPAKKQPKN) is disordered. Position 1684 is a phosphoserine (serine 1684).

Interacts with LIMK2. In terms of tissue distribution, predominantly present in oocytes and barely detectable in granulosa cells (at protein level).

The protein resides in the peroxisome. Essential regulator of oogenesis required for female meiotic progression to repress transposable elements and preventing their mobilization, which is essential for the germline integrity. Probably acts via some RNA metabolic process, equivalent to the piRNA system in males, which mediates the repression of transposable elements during meiosis by forming complexes composed of RNAs and governs the methylation and subsequent repression of transposons. Also required to protect from DNA double-strand breaks. In Mus musculus (Mouse), this protein is Meiosis regulator and mRNA stability factor 1 (Marf1).